The following is a 300-amino-acid chain: Geranylgeranyl diphosphate synthase (300 aa).

Residues lysine 50, arginine 53, and histidine 82 each coordinate isopentenyl diphosphate. Residues aspartate 89 and aspartate 95 each coordinate Mg(2+). Position 100 (arginine 100) interacts with (2E,6E)-farnesyl diphosphate. Arginine 101 contacts isopentenyl diphosphate. Lysine 186, threonine 187, and glutamine 224 together coordinate (2E,6E)-farnesyl diphosphate.

It belongs to the FPP/GGPP synthase family. The cofactor is Mg(2+).

The protein localises to the plastid. Its subcellular location is the cyanelle. The enzyme catalyses isopentenyl diphosphate + (2E,6E)-farnesyl diphosphate = (2E,6E,10E)-geranylgeranyl diphosphate + diphosphate. It participates in isoprenoid biosynthesis; geranylgeranyl diphosphate biosynthesis; geranylgeranyl diphosphate from farnesyl diphosphate and isopentenyl diphosphate: step 1/1. Catalyzes the condensation of farnesyl diphosphate (FPP) and isopentenyl diphosphate (IPP) to yield geranylgeranyl diphosphate (GGPP) needed for biosynthesis of carotenoids and diterpenes. This is Geranylgeranyl diphosphate synthase (crtE) from Cyanophora paradoxa.